The following is a 234-amino-acid chain: uncharacterized protein (234 aa).

The 60-residue stretch at 24-83 (VERRNELVDGTIEAIRRHGRFLSMDEIAAEIGVSKTVLYRYFVDKNDLTTAVMMRFTQTT) folds into the HTH tetR-type domain. The segment at residues 46-65 (SMDEIAAEIGVSKTVLYRYF) is a DNA-binding region (H-T-H motif).

This is an uncharacterized protein from Mycobacterium tuberculosis (strain CDC 1551 / Oshkosh).